The following is a 718-amino-acid chain: Phenylalanine--tRNA ligase beta subunit (718 aa).

The region spanning 39 to 153 (LNEISGIKFG…IFDLESNPLK (115 aa)) is the tRNA-binding domain. The region spanning 386–460 (SKKTFLDLNY…RFYGLEKLKD (75 aa)) is the B5 domain. 3 residues coordinate Mg(2+): Asp-438, Asp-444, and Asp-448.

This sequence belongs to the phenylalanyl-tRNA synthetase beta subunit family. Type 1 subfamily. Tetramer of two alpha and two beta subunits. Mg(2+) serves as cofactor.

Its subcellular location is the cytoplasm. The catalysed reaction is tRNA(Phe) + L-phenylalanine + ATP = L-phenylalanyl-tRNA(Phe) + AMP + diphosphate + H(+). The chain is Phenylalanine--tRNA ligase beta subunit from Mesomycoplasma hyopneumoniae (strain 232) (Mycoplasma hyopneumoniae).